Reading from the N-terminus, the 971-residue chain is MLRVGRAVACVACNNLASKNMGVRFRMPLQKLHPLSRAIHHRYNASANAQRPPHCSAARHFTSMSRLPMRPPKPSPGGHGGWRYQQHRSFWMLRLASRLLKLRYIVLGSAVGGGYTAKKTYEEWKDMLPDMSAYNWVIPDFVWELSDQIDLDKLTKILPELEEIAKLLPELPDFDKIGENFTFLKSILFTAEAPGDTPVKAATEAPVTATPEASDKQFKKSSDKEKVDQLQEELLRTQMKYQRMLERLEKENKDLRKVVLQKDEKGIHQRKIKKSLIDMYSEVLDILSDFDSNYNTQDHLPRVVVVGDQSAGKTSVLEMIAQARIFPRGSGEMMTRSPVKVTLSEGPHHVAMFKDSSREFDLGKEEDLAALRHEIELRMRKSVKEGQTVSPETISLSVKGPGIQRMVLVDLPGVISTVTAGMAADTKETIFSISKNYMQNPNAIILCIQDGSVDAEADRHRPGQSNGPAGERTIFVLTKVDLAEKNLASPNRIQQIVEGKLFPMKALGYFAVVTGKGSAGESIDSIKDYEEDFFQNSRLLRDGMLKAHQVTTKNLSLAVSDCFWKMVRESVEQQADAFKASRFNLETEWKNNYPRLRELDRNELFEKAKNEILDEVISLSQVTPKHWEAILQKKLWERVSTHVIENIYLPAAQTMNSGTFNTTVDIKLKQWTDKQLPHKALEVAWETLQEEFARFMAEYKGKDQDDIFDKLKEAVKDESIKRHKWNERAMDSLRVIQHNALEDRSITDKPQWDAAIQFMEETLQARLKDTDSVINDMVGPDWKQRWMSWKNRSPEQHTRNETRNELERLLKLHEDHTAYLANDEVTTVRKNLEGRGVEVDPALIKDTWHQLYRRHFLQKALQHCNLCRRGFYYYQRHFVDSELECNDVVLFWRIQRMLLITANTLRQQLTNTEVRRLEKNVKEVLEDFGEDNERKVHLITGRRVQLAEDLKKVREIQEKLEAFIEALHKEK.

A mitochondrion-targeting transit peptide spans 1–89 (MLRVGRAVAC…GGWRYQQHRS (89 aa)). Over 90–98 (FWMLRLASR) the chain is Mitochondrial matrix. A helical transmembrane segment spans residues 99 to 115 (LLKLRYIVLGSAVGGGY). The Mitochondrial intermembrane portion of the chain corresponds to 116–781 (TAKKTYEEWK…SVINDMVGPD (666 aa)). The tract at residues 204–224 (EAPVTATPEASDKQFKKSSDK) is disordered. Residues 213–224 (ASDKQFKKSSDK) show a composition bias toward basic and acidic residues. A coiled-coil region spans residues 219–265 (KKSSDKEKVDQLQEELLRTQMKYQRMLERLEKENKDLRKVVLQKDEK). Positions 297-572 (QDHLPRVVVV…FWKMVRESVE (276 aa)) constitute a Dynamin-type G domain. The G1 motif stretch occupies residues 307 to 314 (GDQSAGKT). GTP is bound by residues serine 310, glycine 312, lysine 313, threonine 314, serine 315, and glycine 329. Residue threonine 314 coordinates Mg(2+). The G2 motif stretch occupies residues 333–336 (MMTR). Positions 335 and 410 each coordinate Mg(2+). Residues 410–413 (DLPG) are G3 motif. The segment at 478–481 (TKVD) is G4 motif. The GTP site is built by lysine 479, aspartate 481, and threonine 514. The interval 512–515 (VVTG) is G5 motif. Stalk region regions lie at residues 600-847 (DRNE…IKDT) and 885-939 (CNDV…VHLI). The segment at 747–867 (TDKPQWDAAI…QKALQHCNLC (121 aa)) is paddle region. An intramembrane segment occupies 782-792 (WKQRWMSWKNR). Topologically, residues 793 to 971 (SPEQHTRNET…AFIEALHKEK (179 aa)) are mitochondrial intermembrane. An intrachain disulfide couples cysteine 867 to cysteine 885. Residues 906–971 (RQQLTNTEVR…AFIEALHKEK (66 aa)) are a coiled coil.

Belongs to the TRAFAC class dynamin-like GTPase superfamily. Dynamin/Fzo/YdjA family. In terms of assembly, oligomeric complex consisting of membrane-bound and soluble forms of OPA1. In terms of processing, cleaved by OMA1 or YME1L downstream of the transmembrane region in response to different signals to generate soluble forms. Cleaved by OMA1 at position S1 following stress conditions, generating the short soluble form (Dynamin-like GTPase OPA1, short form; S-OPA1). Strongly expressed in the brain, ovary and skeletal muscle. In the brain, expression of the mRNA was observed specifically in motor neurons, in nucleus oculomotorius, in nucleus valvulae lateralis, in the medulla oblongata and in the spinal cord.

It localises to the mitochondrion inner membrane. It is found in the mitochondrion intermembrane space. It catalyses the reaction GTP + H2O = GDP + phosphate + H(+). Its function is as follows. Dynamin-related GTPase that is essential for normal mitochondrial morphology by mediating fusion of the mitochondrial inner membranes, regulating cristae morphology and maintaining respiratory chain function. Exists in two forms: the transmembrane, long form (Dynamin-like GTPase OPA1, long form; L-OPA1), which is tethered to the inner mitochondrial membrane, and the short soluble form (Dynamin-like GTPase OPA1, short form; S-OPA1), which results from proteolytic cleavage and localizes in the intermembrane space. Both forms (L-OPA1 and S-OPA1) cooperate to catalyze the fusion of the mitochondrial inner membrane. The equilibrium between L-OPA1 and S-OPA1 is essential: excess levels of S-OPA1, produced by cleavage by OMA1 following loss of mitochondrial membrane potential, lead to an impaired equilibrium between L-OPA1 and S-OPA1, inhibiting mitochondrial fusion. The balance between L-OPA1 and S-OPA1 also influences cristae shape and morphology. Its role in mitochondrial morphology is required for mitochondrial genome maintenance. In terms of biological role, constitutes the transmembrane long form (L-OPA1) that plays a central role in mitochondrial inner membrane fusion and cristae morphology. L-OPA1 and the soluble short form (S-OPA1) form higher-order helical assemblies that coordinate the fusion of mitochondrial inner membranes. Inner membrane-anchored L-OPA1 molecules initiate membrane remodeling by recruiting soluble S-OPA1 to rapidly polymerize into a flexible cylindrical scaffold encaging the mitochondrial inner membrane. Once at the membrane surface, the formation of S-OPA1 helices induce bilayer curvature. OPA1 dimerization through the paddle region, which inserts into cardiolipin-containing membrane, promotes GTP hydrolysis and the helical assembly of a flexible OPA1 lattice on the membrane, which drives membrane curvature and mitochondrial fusion. Plays a role in the maintenance and remodeling of mitochondrial cristae, some invaginations of the mitochondrial inner membrane that provide an increase in the surface area. Probably acts by forming helical filaments at the inside of inner membrane tubes with the shape and dimensions of crista junctions. Functionally, constitutes the soluble short form (S-OPA1) generated by cleavage by OMA1, which plays a central role in mitochondrial inner membrane fusion and cristae morphology. The transmembrane long form (L-OPA1) and the S-OPA1 form higher-order helical assemblies that coordinate the fusion of mitochondrial inner membranes. Inner membrane-anchored L-OPA1 molecules initiate membrane remodeling by recruiting soluble S-OPA1 to rapidly polymerize into a flexible cylindrical scaffold encaging the mitochondrial inner membrane. Once at the membrane surface, the formation of S-OPA1 helices induce bilayer curvature. OPA1 dimerization through the paddle region, which inserts into cardiolipin-containing membrane, promotes GTP hydrolysis and the helical assembly of a flexible OPA1 lattice on the membrane, which drives membrane curvature and mitochondrial fusion. Excess levels of S-OPA1 produced by cleavage by OMA1 following stress conditions that induce loss of mitochondrial membrane potential, lead to an impaired equilibrium between L-OPA1 and S-OPA1, thereby inhibiting mitochondrial fusion. Plays a role in the maintenance and remodeling of mitochondrial cristae, some invaginations of the mitochondrial inner membrane that provide an increase in the surface area. Probably acts by forming helical filaments at the inside of inner membrane tubes with the shape and dimensions of crista junctions. The polypeptide is Dynamin-like GTPase OPA1, mitochondrial (opa1) (Oncorhynchus masou (Cherry salmon)).